A 476-amino-acid chain; its full sequence is Cyclase-associated protein 1 (476 aa).

Disordered regions lie at residues 224–262 (KPAS…KQGM) and 277–319 (GLRK…PPKM). Pro residues predominate over residues 231–243 (KGPPGAPAPPPAP). The segment covering 246-256 (SAESSKPSSSS) has biased composition (low complexity). Positions 280-293 (KVTDDMKTKNRADR) are enriched in basic and acidic residues. Positions 316–453 (PPKMELQMGR…PDGDWVEHAL (138 aa)) constitute a C-CAP/cofactor C-like domain.

This sequence belongs to the CAP family. In terms of tissue distribution, expressed in roots, cotyledons, leaves, stems, flowers, pollen and shoots. Not detected in siliques.

Its function is as follows. Actin monomer binding protein that accelerates the exchange of ADP for ATP. Regulates the pool of unpolymerized ATP-actin. Key intermediate between actin-depolymerizing factor (ADF)-mediated disassembly and the profilin-based nucleation and elongation machinery. The sequence is that of Cyclase-associated protein 1 (CAP1) from Arabidopsis thaliana (Mouse-ear cress).